The sequence spans 262 residues: Acyl-[acyl-carrier-protein]--UDP-N-acetylglucosamine O-acyltransferase (262 aa).

It belongs to the transferase hexapeptide repeat family. LpxA subfamily. In terms of assembly, homotrimer.

It is found in the cytoplasm. The enzyme catalyses a (3R)-hydroxyacyl-[ACP] + UDP-N-acetyl-alpha-D-glucosamine = a UDP-3-O-[(3R)-3-hydroxyacyl]-N-acetyl-alpha-D-glucosamine + holo-[ACP]. It functions in the pathway glycolipid biosynthesis; lipid IV(A) biosynthesis; lipid IV(A) from (3R)-3-hydroxytetradecanoyl-[acyl-carrier-protein] and UDP-N-acetyl-alpha-D-glucosamine: step 1/6. In terms of biological role, involved in the biosynthesis of lipid A, a phosphorylated glycolipid that anchors the lipopolysaccharide to the outer membrane of the cell. In Haemophilus influenzae (strain ATCC 51907 / DSM 11121 / KW20 / Rd), this protein is Acyl-[acyl-carrier-protein]--UDP-N-acetylglucosamine O-acyltransferase.